We begin with the raw amino-acid sequence, 360 residues long: Complement control protein homolog (360 aa).

The N-terminal stretch at 1 to 20 is a signal peptide; the sequence is MYTLHYICLVLSCVIYFVWT. Sushi domains follow at residues 21–81, 82–144, 145–207, and 208–266; these read LSCP…KCQK, KKCS…ICDI, KKCK…KCEF, and IFCK…ECMK. Cystine bridges form between cysteine 23-cysteine 68, cysteine 54-cysteine 79, cysteine 84-cysteine 125, cysteine 111-cysteine 142, cysteine 147-cysteine 191, cysteine 175-cysteine 205, cysteine 210-cysteine 252, and cysteine 238-cysteine 264. Asparagine 36, asparagine 39, asparagine 46, and asparagine 72 each carry an N-linked (GlcNAc...) asparagine; by host glycan. N-linked (GlcNAc...) asparagine; by host glycosylation is present at asparagine 155. A glycan (N-linked (GlcNAc...) asparagine; by host) is linked at asparagine 294. The helical transmembrane segment at 328-350 threads the bilayer; it reads GVLVIILTTSFIIIGIILTGVCL.

It belongs to the receptors of complement activation (RCA) family.

It localises to the membrane. The protein localises to the secreted. In Saimiriine herpesvirus 2 (strain 11) (SaHV-2), this protein is Complement control protein homolog (4).